The following is a 204-amino-acid chain: Altered inheritance of mitochondria protein 20 (204 aa).

A helical transmembrane segment spans residues Val6–Phe26.

It belongs to the SKG1 family.

The protein localises to the vacuole membrane. Functionally, involved in cell cycle progression and surviving DNA damage. This chain is Altered inheritance of mitochondria protein 20 (AIM20), found in Saccharomyces cerevisiae (strain JAY291) (Baker's yeast).